The sequence spans 317 residues: Flavin-dependent thymidylate synthase (317 aa).

Position 46 (Ser46) interacts with FAD. Residues 55–166 (FEWKKEKWIE…ELETDMDFYT (112 aa)) are insert. A ThyX domain is found at 100–317 (AVKERIKEAF…YRGTDKKNVI (218 aa)). DUMP contacts are provided by residues 178-181 (QWMR), 189-193 (EVSKR), and Arg259. FAD-binding positions include 181 to 183 (RHR) and Glu189. A ThyX motif motif is present at residues 181–191 (RHRFGSYNEVS). Asn281 provides a ligand contact to FAD. Arg286 provides a ligand contact to dUMP. Catalysis depends on Arg286, which acts as the Involved in ionization of N3 of dUMP, leading to its activation.

Belongs to the thymidylate synthase ThyX family. As to quaternary structure, homotetramer. It depends on FAD as a cofactor.

The enzyme catalyses dUMP + (6R)-5,10-methylene-5,6,7,8-tetrahydrofolate + NADPH + H(+) = dTMP + (6S)-5,6,7,8-tetrahydrofolate + NADP(+). It functions in the pathway pyrimidine metabolism; dTTP biosynthesis. Its function is as follows. Catalyzes the reductive methylation of 2'-deoxyuridine-5'-monophosphate (dUMP) to 2'-deoxythymidine-5'-monophosphate (dTMP) while utilizing 5,10-methylenetetrahydrofolate (mTHF) as the methyl donor, and NADPH and FADH(2) as the reductant. The polypeptide is Flavin-dependent thymidylate synthase (Aquifex aeolicus (strain VF5)).